The following is a 24-amino-acid chain: uncharacterized protein (24 aa).

This is an uncharacterized protein from Saccharomyces cerevisiae (strain ATCC 204508 / S288c) (Baker's yeast).